Consider the following 88-residue polypeptide: Large ribosomal subunit protein bL27 (88 aa).

This sequence belongs to the bacterial ribosomal protein bL27 family.

This chain is Large ribosomal subunit protein bL27, found in Carboxydothermus hydrogenoformans (strain ATCC BAA-161 / DSM 6008 / Z-2901).